A 485-amino-acid chain; its full sequence is MTQWIAGQWVAGQGDAMTSVSPYNNEVVWQGDSATPAQVESAVAAARDAFLVWKKLSFAEREAIVLNFAEKVKENSEEIAQIIAKETGKPIWETRTEAGAMAGKIAISIRAYHERTGEASREAAGNQIVLRHRPLGVMAVFGPYNFPGHLPNGHIVPALLSGNTVVFKPSEQTPWTGEFAMKLWQEAGLPAGVINLVQGAKETGIALADAKGLDGVLFTGSANTGHILHRQFAGQPGKMLALEMGGNNPMVISDQFGDADATVYTIIQSAFISAGQRCTCARRLYVPVGEKGDQLLDKLVAATLKIRVDQPFAEPAPFMGPQISEAAAKFILDAQANLQSLGGVSLVEAKAGEAAFVSPGIIDATNIAELPDEEYFGPLLQVVRYQSLEQAVELANDTRFGLSAGLVSTDDSEWEYFVDHIRAGIVNRNRQLTGASGDAPFGGPGASGNLRPSAYYAADYCAYPMASMEGGETQLPATFSPGIEL.

220 to 225 (GSANTG) is an NAD(+) binding site. Catalysis depends on residues Glu-243 and Cys-278.

It belongs to the aldehyde dehydrogenase family. AstD subfamily.

It catalyses the reaction N-succinyl-L-glutamate 5-semialdehyde + NAD(+) + H2O = N-succinyl-L-glutamate + NADH + 2 H(+). It participates in amino-acid degradation; L-arginine degradation via AST pathway; L-glutamate and succinate from L-arginine: step 4/5. Functionally, catalyzes the NAD-dependent reduction of succinylglutamate semialdehyde into succinylglutamate. The sequence is that of N-succinylglutamate 5-semialdehyde dehydrogenase from Vibrio atlanticus (strain LGP32) (Vibrio splendidus (strain Mel32)).